Reading from the N-terminus, the 263-residue chain is Small ribosomal subunit protein bS1c (263 aa).

S1 motif domains follow at residues 27-96 (GDIV…LSIR), 114-178 (DSLL…LSHR), and 192-260 (GNII…LSMK).

It belongs to the bacterial ribosomal protein bS1 family.

It localises to the plastid. Its subcellular location is the chloroplast. This chain is Small ribosomal subunit protein bS1c (rps1), found in Pyropia yezoensis (Susabi-nori).